The following is a 459-amino-acid chain: tRNA modification GTPase MnmE (459 aa).

(6S)-5-formyl-5,6,7,8-tetrahydrofolate is bound by residues arginine 24, glutamate 82, and lysine 122. A TrmE-type G domain is found at 219–379; sequence GIKVVISGAP…LRQHLYFSFK (161 aa). GTP-binding positions include 229-234, 248-254, and 273-276; these read NSGKSS, TNFPGTT, and DTAG. Residues serine 233 and threonine 254 each contribute to the Mg(2+) site. Lysine 459 is a (6S)-5-formyl-5,6,7,8-tetrahydrofolate binding site.

Belongs to the TRAFAC class TrmE-Era-EngA-EngB-Septin-like GTPase superfamily. TrmE GTPase family. In terms of assembly, homodimer. Heterotetramer of two MnmE and two MnmG subunits. K(+) is required as a cofactor.

It localises to the cytoplasm. Exhibits a very high intrinsic GTPase hydrolysis rate. Involved in the addition of a carboxymethylaminomethyl (cmnm) group at the wobble position (U34) of certain tRNAs, forming tRNA-cmnm(5)s(2)U34. The polypeptide is tRNA modification GTPase MnmE (Buchnera aphidicola subsp. Baizongia pistaciae (strain Bp)).